A 190-amino-acid polypeptide reads, in one-letter code: ATP synthase subunit delta (190 aa).

The protein belongs to the ATPase delta chain family. F-type ATPases have 2 components, F(1) - the catalytic core - and F(0) - the membrane proton channel. F(1) has five subunits: alpha(3), beta(3), gamma(1), delta(1), epsilon(1). F(0) has three main subunits: a(1), b(2) and c(10-14). The alpha and beta chains form an alternating ring which encloses part of the gamma chain. F(1) is attached to F(0) by a central stalk formed by the gamma and epsilon chains, while a peripheral stalk is formed by the delta and b chains.

The protein resides in the cell inner membrane. F(1)F(0) ATP synthase produces ATP from ADP in the presence of a proton or sodium gradient. F-type ATPases consist of two structural domains, F(1) containing the extramembraneous catalytic core and F(0) containing the membrane proton channel, linked together by a central stalk and a peripheral stalk. During catalysis, ATP synthesis in the catalytic domain of F(1) is coupled via a rotary mechanism of the central stalk subunits to proton translocation. Its function is as follows. This protein is part of the stalk that links CF(0) to CF(1). It either transmits conformational changes from CF(0) to CF(1) or is implicated in proton conduction. The polypeptide is ATP synthase subunit delta (Petrotoga mobilis (strain DSM 10674 / SJ95)).